The chain runs to 286 residues: ATP synthase gamma chain (286 aa).

Belongs to the ATPase gamma chain family. F-type ATPases have 2 components, CF(1) - the catalytic core - and CF(0) - the membrane proton channel. CF(1) has five subunits: alpha(3), beta(3), gamma(1), delta(1), epsilon(1). CF(0) has three main subunits: a, b and c.

It is found in the cell inner membrane. Its function is as follows. Produces ATP from ADP in the presence of a proton gradient across the membrane. The gamma chain is believed to be important in regulating ATPase activity and the flow of protons through the CF(0) complex. In Dechloromonas aromatica (strain RCB), this protein is ATP synthase gamma chain.